The following is a 463-amino-acid chain: Chromosomal replication initiator protein DnaA (463 aa).

The interval 1–83 (MSTNQIILTD…LQLFQHYNNT (83 aa)) is domain I, interacts with DnaA modulators. Residues 83–124 (TIKSIEIITKELPGITQTVIALPTKTFADIGSSELNAENIFS) are domain II. Residues 125–343 (TLDVRFTFDN…GALNKVIAHS (219 aa)) are domain III, AAA+ region. ATP-binding residues include G171, G173, K174, and T175. Residues 344-463 (NFTLKEITLE…INLLMKILQN (120 aa)) are domain IV, binds dsDNA.

The protein belongs to the DnaA family. Oligomerizes as a right-handed, spiral filament on DNA at oriC.

It is found in the cytoplasm. In terms of biological role, plays an essential role in the initiation and regulation of chromosomal replication. ATP-DnaA binds to the origin of replication (oriC) to initiate formation of the DNA replication initiation complex once per cell cycle. Binds the DnaA box (a 9 base pair repeat at the origin) and separates the double-stranded (ds)DNA. Forms a right-handed helical filament on oriC DNA; dsDNA binds to the exterior of the filament while single-stranded (ss)DNA is stabiized in the filament's interior. The ATP-DnaA-oriC complex binds and stabilizes one strand of the AT-rich DNA unwinding element (DUE), permitting loading of DNA polymerase. After initiation quickly degrades to an ADP-DnaA complex that is not apt for DNA replication. Binds acidic phospholipids. The polypeptide is Chromosomal replication initiator protein DnaA (Rickettsia massiliae (strain Mtu5)).